Consider the following 364-residue polypeptide: MPNNQLSNATISNTINMSAWQGRTDPEDGELGMRWHQKVLPADQANEEGIMLLGFACDAGVARNKGRTGAYGAPIAIRRALANLAWHHQEPVYDGGDISCDDGNLELAQHRLGEDVCLALRQKHKVIVFGGGHEMAWGTFQGIGAYLLQKQEATESIKAPLNLSEEKTAEPNVKGTAIPTPRVGIINFDAHFDLRNPPSGPQASAGSSGTPFHQIARFCELQHWPFNYACLGLNRGSNTQALYEKADRLGVLYRDDTELTHRTIEQTQAALNTFIAECDYLYLTIDLDVFPACVAPGVSAPAARGVSLEIIEQLMEPILTAKTEQGDSKLLVADLAEYNPRFDIDNQTARLAARLTWTIARAIR.

Residues H133, D189, H191, D193, D286, and D288 each coordinate Mn(2+).

It belongs to the arginase family. Mn(2+) serves as cofactor.

It catalyses the reaction N-formimidoyl-L-glutamate + H2O = formamide + L-glutamate. It functions in the pathway amino-acid degradation; L-histidine degradation into L-glutamate; L-glutamate from N-formimidoyl-L-glutamate (hydrolase route): step 1/1. Functionally, catalyzes the conversion of N-formimidoyl-L-glutamate to L-glutamate and formamide. The sequence is that of Formimidoylglutamase from Photobacterium profundum (strain SS9).